A 269-amino-acid polypeptide reads, in one-letter code: MSRLEQRFAELKAEGRSALVTFVTAGDPGYDASLQILKGLPAAGADVIELGMPFTDPMADGVAIQLATLRALEAGQTLVKTLQMVREFRVDNQTTPIVLMGYYNPIHRFGVDTFVTQAKEAGVDGLIIVDLPPEHDAELATPAQAAGIDFIRLTTPTTDDARLPRVLERSSGFVYYVSVAGVTGAGSATTEHVTEAIARLRRHTDLPISVGFGIRTPEQAANIARLADGVVVGSALVDKIAQAKSADQAVTDVLSLCSALAEGVRGARR.

Active-site proton acceptor residues include Glu49 and Asp60.

Belongs to the TrpA family. In terms of assembly, tetramer of two alpha and two beta chains.

It catalyses the reaction (1S,2R)-1-C-(indol-3-yl)glycerol 3-phosphate + L-serine = D-glyceraldehyde 3-phosphate + L-tryptophan + H2O. It participates in amino-acid biosynthesis; L-tryptophan biosynthesis; L-tryptophan from chorismate: step 5/5. Its function is as follows. The alpha subunit is responsible for the aldol cleavage of indoleglycerol phosphate to indole and glyceraldehyde 3-phosphate. In Pseudomonas putida (strain ATCC 47054 / DSM 6125 / CFBP 8728 / NCIMB 11950 / KT2440), this protein is Tryptophan synthase alpha chain.